Consider the following 754-residue polypeptide: MAIVNHTLGFPRVGLRRELKKAQESYWAGNATQEELLTVGRELRARHWQQQKDAGVDLLPVGDFAWYDHVLTTSLLLGNVPARHQNEDGSVDLDTLFRIGRGRAPTGQPAAAAEMTKWFNTNYHYMVPEFTKGQQFKLTWTQLLDEVDEALALGHKVKPVLLGPVTYLWLGKVKGEQFDRLSLLQDILPVYQQVLAELTKRGIEWVQIDEPALALELSQEWLAAFKPAYDALQGQVKLLLTTYFDSVSQNLETIKALPVQGLHIDLVHGKDDAATLSAQLPANWVLSLGVINGRNVWRADLSNWFERLQPLVGTRDLWLGSSCSLLHSPIDLSVEVRLDDEVKSWFAFAIQKCAELSLLSQALNSGNGQALEAYSAPIRARRTSTRVNNVAVAQRLAAITAQDSQRQNVYSVRADAQRERFNLPAWPTTTIGSFPQTTEIRGLRLDFKQGRLDGNNYRTGIAEHIKQAVAEQERLGLDVLVHGEAERNDMVEYFGEHLDGFVFTQNGWVQSYGSRCVKPPVIIGDVSRPEAITVEWAKYAQSLTDKPMKGMLTGPVTILCWSFPREDVTRETIAKQIALALRDEVADLEAAGIGIIQIDEPALREGLPLHRSDWDAYLAWAVDAFRLNAAVAKDDTQIHTHMCYCEFNDIMDSIAALDADVITIETSRSDMELLESFEEFEYPNEIGPGVYDIHSPNVPSVEWMEALLKKAAQRIPAERLWVNPDCGLKTRGWPETRQALANMVQAAQRLRETQ.

5-methyltetrahydropteroyltri-L-glutamate is bound by residues 17–20 and K117; that span reads RELK. Residues 431 to 433 and E484 contribute to the L-homocysteine site; that span reads IGS. Residues 431–433 and E484 contribute to the L-methionine site; that span reads IGS. Residues 515-516 and W561 contribute to the 5-methyltetrahydropteroyltri-L-glutamate site; that span reads RC. Residue D599 coordinates L-homocysteine. Residue D599 participates in L-methionine binding. E605 contacts 5-methyltetrahydropteroyltri-L-glutamate. H641, C643, and E665 together coordinate Zn(2+). The Proton donor role is filled by H694. C726 contributes to the Zn(2+) binding site.

This sequence belongs to the vitamin-B12 independent methionine synthase family. Zn(2+) serves as cofactor.

The enzyme catalyses 5-methyltetrahydropteroyltri-L-glutamate + L-homocysteine = tetrahydropteroyltri-L-glutamate + L-methionine. Its pathway is amino-acid biosynthesis; L-methionine biosynthesis via de novo pathway; L-methionine from L-homocysteine (MetE route): step 1/1. Its function is as follows. Catalyzes the transfer of a methyl group from 5-methyltetrahydrofolate to homocysteine resulting in methionine formation. This is 5-methyltetrahydropteroyltriglutamate--homocysteine methyltransferase from Pectobacterium atrosepticum (strain SCRI 1043 / ATCC BAA-672) (Erwinia carotovora subsp. atroseptica).